A 348-amino-acid polypeptide reads, in one-letter code: NADH-quinone oxidoreductase subunit H (348 aa).

Transmembrane regions (helical) follow at residues Ile-21–Val-41, Gly-87–Ile-107, Val-120–Gly-140, Ile-166–Val-186, Gly-195–Ile-215, Asn-258–Ile-278, Gly-288–Ala-308, and Val-325–Gly-345.

It belongs to the complex I subunit 1 family. As to quaternary structure, NDH-1 is composed of 14 different subunits. Subunits NuoA, H, J, K, L, M, N constitute the membrane sector of the complex.

It is found in the cell inner membrane. It catalyses the reaction a quinone + NADH + 5 H(+)(in) = a quinol + NAD(+) + 4 H(+)(out). Functionally, NDH-1 shuttles electrons from NADH, via FMN and iron-sulfur (Fe-S) centers, to quinones in the respiratory chain. The immediate electron acceptor for the enzyme in this species is believed to be ubiquinone. Couples the redox reaction to proton translocation (for every two electrons transferred, four hydrogen ions are translocated across the cytoplasmic membrane), and thus conserves the redox energy in a proton gradient. This subunit may bind ubiquinone. This chain is NADH-quinone oxidoreductase subunit H, found in Erythrobacter litoralis (strain HTCC2594).